A 127-amino-acid chain; its full sequence is Glycine cleavage system H protein (127 aa).

Positions 23–105 (KVSVGITDFA…YGEGWIAVIE (83 aa)) constitute a Lipoyl-binding domain. At lysine 64 the chain carries N6-lipoyllysine.

The protein belongs to the GcvH family. As to quaternary structure, the glycine cleavage system is composed of four proteins: P, T, L and H. It depends on (R)-lipoate as a cofactor.

In terms of biological role, the glycine cleavage system catalyzes the degradation of glycine. The H protein shuttles the methylamine group of glycine from the P protein to the T protein. The polypeptide is Glycine cleavage system H protein (Coprothermobacter proteolyticus (strain ATCC 35245 / DSM 5265 / OCM 4 / BT)).